Here is a 274-residue protein sequence, read N- to C-terminus: MGTLTVNQNKLQKRLRRLAGEAVADFNMIEDGDKVMVCLSGGKDSYTLLDVLLHLQKVAPIQFEIVAVNMDQKQPGFPEYVLPAYLKELGVEYHIVEKDTYSVVKELIPEGKTTCSLCSRLRRGTLYTFADEIGATKMALGHHRDDIVETFFLNMFFNGSLKAMPPKLRADDGRNVVIRPLAYCNEKDIQAYSDFKQFPIIPCNLCGSQENLQRQVVKEMLLDWERKTPGRTESIFRSLQNVIPSQLADRNLFDFASLKIDETAASRFVNVVNL.

Residues 40–45 (SGGKDS) carry the PP-loop motif motif. [4Fe-4S] cluster is bound by residues Cys115, Cys118, and Cys206.

The protein belongs to the TtcA family. In terms of assembly, homodimer. Requires Mg(2+) as cofactor. The cofactor is [4Fe-4S] cluster.

The protein localises to the cytoplasm. It carries out the reaction cytidine(32) in tRNA + S-sulfanyl-L-cysteinyl-[cysteine desulfurase] + AH2 + ATP = 2-thiocytidine(32) in tRNA + L-cysteinyl-[cysteine desulfurase] + A + AMP + diphosphate + H(+). It functions in the pathway tRNA modification. Functionally, catalyzes the ATP-dependent 2-thiolation of cytidine in position 32 of tRNA, to form 2-thiocytidine (s(2)C32). The sulfur atoms are provided by the cysteine/cysteine desulfurase (IscS) system. The protein is tRNA-cytidine(32) 2-sulfurtransferase of Pseudomonas fluorescens (strain SBW25).